The sequence spans 286 residues: Pantothenate synthetase (286 aa).

30-37 (MGNLHSGH) provides a ligand contact to ATP. Catalysis depends on His-37, which acts as the Proton donor. A (R)-pantoate-binding site is contributed by Gln-61. Residue Gln-61 participates in beta-alanine binding. 149–152 (GQKD) serves as a coordination point for ATP. Gln-155 serves as a coordination point for (R)-pantoate. ATP contacts are provided by residues Val-178 and 186-189 (LSSR).

The protein belongs to the pantothenate synthetase family. As to quaternary structure, homodimer.

It localises to the cytoplasm. The catalysed reaction is (R)-pantoate + beta-alanine + ATP = (R)-pantothenate + AMP + diphosphate + H(+). Its pathway is cofactor biosynthesis; (R)-pantothenate biosynthesis; (R)-pantothenate from (R)-pantoate and beta-alanine: step 1/1. Functionally, catalyzes the condensation of pantoate with beta-alanine in an ATP-dependent reaction via a pantoyl-adenylate intermediate. The protein is Pantothenate synthetase of Pseudomonas fluorescens (strain ATCC BAA-477 / NRRL B-23932 / Pf-5).